Reading from the N-terminus, the 954-residue chain is Regulatory protein FlaEY (954 aa).

Functions in trans to modulate the level of transcription of the flagellin genes and several genes encoding chemotaxis functions. It is itself temporally controlled. In Caulobacter vibrioides (strain ATCC 19089 / CIP 103742 / CB 15) (Caulobacter crescentus), this protein is Regulatory protein FlaEY (flaEY).